A 312-amino-acid polypeptide reads, in one-letter code: Protoheme IX farnesyltransferase (312 aa).

8 helical membrane-spanning segments follow: residues 12–32 (LALT…PAML), 41–61 (FGLI…ANTF), 93–113 (VFAW…CHSW), 114–134 (LAAG…TKWL), 141–161 (NVIW…AVIT), 168–188 (FHAG…IFFW), 240–260 (VPAA…WFII), and 290–310 (ILFV…AHAV).

This sequence belongs to the UbiA prenyltransferase family. Protoheme IX farnesyltransferase subfamily.

It localises to the cell membrane. The enzyme catalyses heme b + (2E,6E)-farnesyl diphosphate + H2O = Fe(II)-heme o + diphosphate. It participates in porphyrin-containing compound metabolism; heme O biosynthesis; heme O from protoheme: step 1/1. In terms of biological role, converts heme B (protoheme IX) to heme O by substitution of the vinyl group on carbon 2 of heme B porphyrin ring with a hydroxyethyl farnesyl side group. This chain is Protoheme IX farnesyltransferase, found in Corynebacterium jeikeium (strain K411).